A 74-amino-acid chain; its full sequence is MLVFYALLFVTVFSNTVMGATIDKPIPKPILREAIEEIEVNKRAQNHYCKEHNCPPGKHCPKVPIACVYGPCCF.

An N-terminal signal peptide occupies residues 1 to 19 (MLVFYALLFVTVFSNTVMG). Residues 20 to 41 (ATIDKPIPKPILREAIEEIEVN) constitute a propeptide that is removed on maturation.

The protein belongs to the scoloptoxin-07 family. Contains 3 disulfide bonds. Expressed by the venom gland.

It is found in the secreted. Toxin that inhibits voltage-gated potassium channel currents in DRG neurons (IC(50)=about 570 nM). In vivo, induces neurotoxicity shown by twitching, paralysis, and body contraction. In vivo, insects injected with this toxin showed signs of neurotoxicity including twitching, paralysis, and body contraction. This is Kappa-scoloptoxin(07)-Ssm2a from Scolopendra mutilans (Chinese red-headed centipede).